Here is a 351-residue protein sequence, read N- to C-terminus: MSAPVIPKTQKGVIFETSGGPLMYKDIPVPVPADDEILVNVKFSGVCHTDLHAWKGDWPLDTKLPLVGGHEGAGVVVAKGKNVDTFEIGDYAGIKWINKACYTCEFCQVAAEPNCPNATMSGYTHDGSFQQYATANAVQAAHIPKNCDLAEIAPILCAGITVYKALKTAAILAGQWVAVTGAGGGLGTLAVQYAKAMGYRVLAIDTGADKEKMCKDLGAEVFIDFAKTKDLVKDVQEATKGGPHAVINVSVSEFAVNQSIEYVRTLGTVVLVGLPAGAVCKSPIFQQVARSIQIKGSYVGNRADSQEAIEFFSRGLVKSPIIIIGLSELEKVYKLMEEGKIAGRYVLDTSK.

Cys-47, His-70, Cys-101, Cys-104, Cys-107, Cys-115, and Cys-157 together coordinate Zn(2+). NAD(+) contacts are provided by residues Gly-181–Gly-187, Asp-205, Lys-210, Val-272–Leu-274, and Arg-344.

Belongs to the zinc-containing alcohol dehydrogenase family. In terms of assembly, homotetramer. It depends on Zn(2+) as a cofactor.

The enzyme catalyses a secondary alcohol + NAD(+) = a ketone + NADH + H(+). Its function is as follows. Versatile oxidoreductase that catalyzes the oxidation and reduction of a broad range of substrates. Preferentially oxidizes secondary alcohols. Has highest activity for racemic 2-octanol. Is also an efficient reductase for selected substrates. Substrate selectivity was found for medium chain lipophilic ketones. Has highest activities for 2-octanone, 2-nonanone and 2-decanone. The enzyme is (S)-selective in the reduction direction and produces exclusively the (S)-enantiomer. The chain is Alcohol dehydrogenase 2 (ADH2) from Yarrowia lipolytica (strain CLIB 122 / E 150) (Yeast).